Consider the following 347-residue polypeptide: Probable dual-specificity RNA methyltransferase RlmN (347 aa).

The active-site Proton acceptor is E90. Residues 96–326 (YKHGNSICIS…VTVRREMGSD (231 aa)) form the Radical SAM core domain. C103 and C331 form a disulfide bridge. Residues C110, C114, and C117 each coordinate [4Fe-4S] cluster. Residues 157–158 (GE), S189, 212–214 (SLH), and N288 each bind S-adenosyl-L-methionine. Catalysis depends on C331, which acts as the S-methylcysteine intermediate.

This sequence belongs to the radical SAM superfamily. RlmN family. [4Fe-4S] cluster serves as cofactor.

It localises to the cytoplasm. It carries out the reaction adenosine(2503) in 23S rRNA + 2 reduced [2Fe-2S]-[ferredoxin] + 2 S-adenosyl-L-methionine = 2-methyladenosine(2503) in 23S rRNA + 5'-deoxyadenosine + L-methionine + 2 oxidized [2Fe-2S]-[ferredoxin] + S-adenosyl-L-homocysteine. The enzyme catalyses adenosine(37) in tRNA + 2 reduced [2Fe-2S]-[ferredoxin] + 2 S-adenosyl-L-methionine = 2-methyladenosine(37) in tRNA + 5'-deoxyadenosine + L-methionine + 2 oxidized [2Fe-2S]-[ferredoxin] + S-adenosyl-L-homocysteine. Its function is as follows. Specifically methylates position 2 of adenine 2503 in 23S rRNA and position 2 of adenine 37 in tRNAs. The protein is Probable dual-specificity RNA methyltransferase RlmN of Clostridium botulinum (strain Eklund 17B / Type B).